Here is a 548-residue protein sequence, read N- to C-terminus: (S)-beta-macrocarpene synthase (548 aa).

Positions 302 and 306 each coordinate Mg(2+). Aspartate 302, aspartate 306, arginine 443, and asparagine 446 together coordinate substrate. The DDXXD motif signature appears at 302 to 306 (DDTLD). Residues asparagine 446, serine 450, and glutamate 454 each contribute to the Mg(2+) site.

It belongs to the terpene synthase family. Monomer. Mg(2+) is required as a cofactor. The cofactor is Mn(2+). In terms of tissue distribution, expressed in roots. Not detected in leaves, unless damaged by herbivory or infected by fungi.

The protein resides in the cytoplasm. It catalyses the reaction (S)-beta-bisabolene = (S)-beta-macrocarpene. The catalysed reaction is (2E,6E)-farnesyl diphosphate = (S)-beta-bisabolene + diphosphate. The enzyme catalyses (2E)-geranyl diphosphate = (4S)-limonene + diphosphate. It carries out the reaction (2E)-geranyl diphosphate = beta-myrcene + diphosphate. It catalyses the reaction (2E)-geranyl diphosphate = terpinolene + diphosphate. The catalysed reaction is (2E)-geranyl diphosphate + H2O = (S)-linalool + diphosphate. Its pathway is secondary metabolite biosynthesis; terpenoid biosynthesis. Its function is as follows. Involved in the biosynthesis of the bicyclic sesquiterpene (S)-beta-macrocarpene. Can use both geranyl diphosphate and farnesyl diphosphate as substrate, but not geranylgeranyl diphosphate. Produces mainly (S)-beta-macrocarpene, but also smaller amounts of beta-bisabolene and (E)-beta-farnesene when used with farnesyl diphosphate as substrate. In the presence of geranyl diphosphate, produces the acyclic monoterpenes beta-myrcene and linalool along with minor amounts of the cyclic compounds limonene, alpha-thujene, sabinene and alpha-terpinolene. May be involved in plant defense. This chain is (S)-beta-macrocarpene synthase, found in Zea mays (Maize).